The primary structure comprises 267 residues: Mitochondrial S-adenosylmethionine carrier protein (267 aa).

Solcar repeat units lie at residues 4–77, 86–168, and 177–265; these read REFT…TKSV, LAPI…LKAV, and LDSW…VRRT. Helical transmembrane passes span 5–25, 49–69, 85–105, 142–162, 182–202, and 238–258; these read EFTA…LTLF, IYAG…AFFV, NLAP…ACLI, RGYG…FPLW, AAVC…PLDV, and FAGS…FLGA.

Belongs to the mitochondrial carrier (TC 2.A.29) family.

It is found in the mitochondrion inner membrane. It catalyses the reaction S-adenosyl-L-homocysteine(out) + S-adenosyl-L-methionine(in) = S-adenosyl-L-homocysteine(in) + S-adenosyl-L-methionine(out). Its function is as follows. Mitochondrial S-adenosyl-L-methionine/S-adenosyl-L-homocysteine antiporter. Mediates the exchange of cytosolic S-adenosyl-L-methionine, the predominant methyl-group donor for macromolecule methylation processes, for mitochondrial S-adenosylhomocysteine(SAH), a by-product of methylation reactions. This Danio rerio (Zebrafish) protein is Mitochondrial S-adenosylmethionine carrier protein (slc25a26).